The chain runs to 342 residues: S-adenosylmethionine:tRNA ribosyltransferase-isomerase (342 aa).

Belongs to the QueA family. In terms of assembly, monomer.

The protein resides in the cytoplasm. The catalysed reaction is 7-aminomethyl-7-carbaguanosine(34) in tRNA + S-adenosyl-L-methionine = epoxyqueuosine(34) in tRNA + adenine + L-methionine + 2 H(+). Its pathway is tRNA modification; tRNA-queuosine biosynthesis. Functionally, transfers and isomerizes the ribose moiety from AdoMet to the 7-aminomethyl group of 7-deazaguanine (preQ1-tRNA) to give epoxyqueuosine (oQ-tRNA). The chain is S-adenosylmethionine:tRNA ribosyltransferase-isomerase from Listeria welshimeri serovar 6b (strain ATCC 35897 / DSM 20650 / CCUG 15529 / CIP 8149 / NCTC 11857 / SLCC 5334 / V8).